The chain runs to 441 residues: Velvet complex subunit B (441 aa).

Composition is skewed to polar residues over residues 1–14 (MNPG…QPGH) and 60–75 (MMQQ…STTE). A disordered region spans residues 1 to 104 (MNPGYSSTAS…QPHVGEQDGR (104 aa)). In terms of domain architecture, Velvet spans 100–426 (EQDGRKYRLD…AGQGIKIPIR (327 aa)).

It belongs to the velvet family. VelB subfamily. In terms of assembly, component of the heterotrimeric velvet complex composed of LAEA, VEA and VELB; VEA acting as a bridging protein between LAEA and VELB. Forms a heterodimeric complex with VOSA; the formation of the VELB-VOSA complex is light-dependent.

The protein resides in the nucleus. It localises to the cytoplasm. In terms of biological role, component of the velvet transcription factor complex that controls sexual/asexual developmental ratio in response to light, promoting sexual development in the darkness while stimulating asexual sporulation under illumination. The velvet complex acts as a global regulator for secondary metabolite gene expression. Component of the VELB-VOSA heterodimeric complex that plays a dual role in activating genes associated with spore maturation and repressing certain development-associated genes. The VELB-VOSA complex binds DNA through the DNA-binding domain of VOSA that recognizes an 11-nucleotide consensus sequence 5'-CTGGCCGCGGC-3' consisting of two motifs in the promoters of key developmental regulatory genes. Involved in the regulation of the response to eactive oxygen species (ROS) stress. The protein is Velvet complex subunit B of Pyricularia oryzae (strain 70-15 / ATCC MYA-4617 / FGSC 8958) (Rice blast fungus).